A 390-amino-acid chain; its full sequence is Fer-related kinase 1 (390 aa).

An SH2 domain is found at 23 to 119 (YYHGMVPRQD…ASGAKIRRPM (97 aa)). Residues 131–386 (IVANKKLGEG…SIHKKLREFY (256 aa)) enclose the Protein kinase domain. Residues 137-145 (LGEGAFGDV) and Lys161 contribute to the ATP site. Asp252 serves as the catalytic Proton acceptor.

Belongs to the protein kinase superfamily. Tyr protein kinase family. Fes/fps subfamily. Interacts with hmp-2. Requires Mn(2+) as cofactor.

The protein localises to the nucleus. It localises to the cytoplasm. The protein resides in the cell junction. Its subcellular location is the cell membrane. The catalysed reaction is L-tyrosyl-[protein] + ATP = O-phospho-L-tyrosyl-[protein] + ADP + H(+). Non-receptor tyrosine-protein kinase which plays a role in morphogenesis by regulating the epidermal enclosure of the embryo, independently of its kinase activity. Prevents hyperactivation of the Wnt signaling pathway during endoderm development, probably by preventing hmp-2 nuclear translocation. The sequence is that of Fer-related kinase 1 from Caenorhabditis elegans.